The chain runs to 685 residues: Putative protein FAR1-RELATED SEQUENCE 10 (685 aa).

An FAR1 domain is found at 69-161; it reads EYYSTFARKS…SNVHNHELLE (93 aa). The MULE domain occupies 292–388; sequence VVVFDTSYRS…FMSHIVSKLA (97 aa). The SWIM-type zinc-finger motif lies at 565-603; sequence GECCVIWNPENEEIQCSCKEFEHSGILCRHTLRVLTVKN.

Belongs to the FHY3/FAR1 family.

This Arabidopsis thaliana (Mouse-ear cress) protein is Putative protein FAR1-RELATED SEQUENCE 10 (FRS10).